The primary structure comprises 552 residues: CTP synthase (552 aa).

An amidoligase domain region spans residues 1–273 (MSESKKNPET…LTPIARRFNM (273 aa)). Position 21 (serine 21) interacts with CTP. UTP is bound at residue serine 21. ATP is bound by residues 22 to 27 (SLGKGI) and aspartate 79. Mg(2+) contacts are provided by aspartate 79 and glutamate 147. CTP is bound by residues 154 to 156 (DIE), 194 to 199 (KTKPTQ), and lysine 230. UTP-binding positions include 194–199 (KTKPTQ) and lysine 230. Residues 298–548 (TIAFVGKYLS…IQKSLELKKV (251 aa)) enclose the Glutamine amidotransferase type-1 domain. Residue glycine 359 participates in L-glutamine binding. The active-site Nucleophile; for glutamine hydrolysis is the cysteine 386. Residues 387–390 (LGMQ), glutamate 410, and arginine 478 each bind L-glutamine. Active-site residues include histidine 521 and glutamate 523.

Belongs to the CTP synthase family. Homotetramer.

It catalyses the reaction UTP + L-glutamine + ATP + H2O = CTP + L-glutamate + ADP + phosphate + 2 H(+). The enzyme catalyses L-glutamine + H2O = L-glutamate + NH4(+). It carries out the reaction UTP + NH4(+) + ATP = CTP + ADP + phosphate + 2 H(+). It functions in the pathway pyrimidine metabolism; CTP biosynthesis via de novo pathway; CTP from UDP: step 2/2. With respect to regulation, allosterically activated by GTP, when glutamine is the substrate; GTP has no effect on the reaction when ammonia is the substrate. The allosteric effector GTP functions by stabilizing the protein conformation that binds the tetrahedral intermediate(s) formed during glutamine hydrolysis. Inhibited by the product CTP, via allosteric rather than competitive inhibition. Functionally, catalyzes the ATP-dependent amination of UTP to CTP with either L-glutamine or ammonia as the source of nitrogen. Regulates intracellular CTP levels through interactions with the four ribonucleotide triphosphates. In Wolinella succinogenes (strain ATCC 29543 / DSM 1740 / CCUG 13145 / JCM 31913 / LMG 7466 / NCTC 11488 / FDC 602W) (Vibrio succinogenes), this protein is CTP synthase.